The chain runs to 113 residues: Ribosome-binding factor A (113 aa).

Belongs to the RbfA family. As to quaternary structure, monomer. Binds 30S ribosomal subunits, but not 50S ribosomal subunits or 70S ribosomes.

Its subcellular location is the cytoplasm. One of several proteins that assist in the late maturation steps of the functional core of the 30S ribosomal subunit. Associates with free 30S ribosomal subunits (but not with 30S subunits that are part of 70S ribosomes or polysomes). Required for efficient processing of 16S rRNA. May interact with the 5'-terminal helix region of 16S rRNA. This is Ribosome-binding factor A from Oceanobacillus iheyensis (strain DSM 14371 / CIP 107618 / JCM 11309 / KCTC 3954 / HTE831).